The following is a 352-amino-acid chain: Hematopoietic SH2 domain-containing protein (352 aa).

The 92-residue stretch at 34-125 (WFHGAISRED…PRRELLTQPC (92 aa)) folds into the SH2 domain. Disordered stretches follow at residues 157–199 (EEAS…LGET) and 241–352 (VISG…PGYC). Residues 180–191 (RITTKEATSSCP) show a composition bias toward polar residues. Positions 283–295 (PKDRKVPTRKAER) are enriched in basic and acidic residues. Over residues 343 to 352 (QPPPFAPGYC) the composition is skewed to pro residues.

Interacts with FES and TNK2. In terms of processing, may be phosphorylated by FES and ACK1. Predominantly expressed in spleen and hematopoietic cells such as peripheral blood leukocytes and weakly expressed in prostate, thymus, heart, small intestine and placenta.

It is found in the cytoplasm. The protein localises to the nucleus. Functionally, may be a modulator of the apoptotic response through its ability to affect mitochondrial stability. Adapter protein involved in tyrosine kinase and CD28 signaling. Seems to affect CD28-mediated activation of the RE/AP element of the interleukin-2 promoter. The polypeptide is Hematopoietic SH2 domain-containing protein (HSH2D) (Homo sapiens (Human)).